A 394-amino-acid polypeptide reads, in one-letter code: Myb-related protein 2 (394 aa).

Residues 42-102 (TDAKPRLKWT…HLQKYRLSKN (61 aa)) form the HTH myb-type domain. A DNA-binding region (H-T-H motif) is located at residues 73–98 (PKTIMKVMGIPGLTLYHLKSHLQKYR). The tract at residues 148-168 (GEALQMQIEVQRRLHEQLEVQ) is coiled coil. Residues 161 to 166 (LHEQLE) carry the LHEQLE motif. The tract at residues 338-363 (LHGHKSQHQQGNNEDHKLETRNRKGM) is disordered. The segment covering 350–363 (NEDHKLETRNRKGM) has biased composition (basic and acidic residues).

It belongs to the MYB-CC family. As to quaternary structure, isoform 1: Homodimer. Isoform 3: Does not form homodimer. In terms of tissue distribution, expressed in phloem and/or cambium.

It localises to the nucleus. Functionally, transcriptional activator that may activate the transcription of specific genes involved in nitrogen uptake or assimilation. Acts redundantly with MYR1 as a repressor of flowering and organ elongation under decreased light intensity. Represses gibberellic acid (GA)-dependent responses and affects levels of bioactive GA. The sequence is that of Myb-related protein 2 from Arabidopsis thaliana (Mouse-ear cress).